The primary structure comprises 301 residues: Isonocardicin synthase (301 aa).

Monomer.

The catalysed reaction is nocardicin G + S-adenosyl-L-methionine = isonocardicin C + S-methyl-5'-thioadenosine + H(+). It carries out the reaction nocardicin E + S-adenosyl-L-methionine = isonocardicin A + S-methyl-5'-thioadenosine + H(+). It functions in the pathway antibiotic biosynthesis. In terms of biological role, involved in the biosynthesis of the beta-lactam antibiotic nocardicin A. In the presence of S-adenosyl-L-methionine (AdoMet), catalyzes the transfer of a 3-amino-3-carboxypropyl group from AdoMet to nocardicin G, forming isonocardicin C. Can also catalyze the transformation of nocardicin E and F to isonocardicin A and B, respectively, but in vivo substrate is probably nocardicin G. The chain is Isonocardicin synthase from Nocardia uniformis subsp. tsuyamanensis.